Reading from the N-terminus, the 786-residue chain is Probable glutamine--tRNA ligase (786 aa).

A compositionally biased stretch (basic and acidic residues) spans 181 to 198 (DLAPKKKEKKPEGPKPSK). The segment at 181-218 (DLAPKKKEKKPEGPKPSKDAAAAATAPGTKNQKEASPE) is disordered. A 'HIGH' region motif is present at residues 276 to 286 (PEPNGVLHIGH). Residues 277–279 (EPN) and 283–289 (HIGHAKA) each bind ATP. 2 residues coordinate L-glutamine: Asp309 and Tyr444. ATP is bound by residues Thr463, 492-493 (RL), and 500-502 (VSK). Positions 499 to 503 (VVSKR) match the 'KMSKS' region motif.

Belongs to the class-I aminoacyl-tRNA synthetase family.

The enzyme catalyses tRNA(Gln) + L-glutamine + ATP = L-glutaminyl-tRNA(Gln) + AMP + diphosphate. This Caenorhabditis elegans protein is Probable glutamine--tRNA ligase.